The primary structure comprises 955 residues: Probable autotransporter YcgV (955 aa).

Positions 616–659 (ASGTVPEPTPNPEPTPAPAQPPIVNPDPTPEPAPTPKPTTTADA) are disordered. The segment covering 622–652 (EPTPNPEPTPAPAQPPIVNPDPTPEPAPTPK) has biased composition (pro residues). The region spanning 687-955 (NQSKDGNIWL…QVNGGYRFSF (269 aa)) is the Autotransporter domain.

Functionally, upon overexpression shows increased adherence to polyvinyl chloride (PVC) plates, increased mature biofilm formation. This is Probable autotransporter YcgV (ycgV) from Escherichia coli (strain K12).